We begin with the raw amino-acid sequence, 172 residues long: C-phycocyanin subunit beta (172 aa).

Asn72 is modified (N4-methylasparagine). (2R,3E)-phycocyanobilin is bound by residues Cys82 and Cys153.

Belongs to the phycobiliprotein family. Heterodimer of an alpha and a beta subunit, which further assembles into trimers and the trimers into hexamers. Post-translationally, contains two covalently linked bilin chromophores. The chromophore on position 82 is added by the phycocyanobilin lyase CpcUS, while the chromophore on position 153 is added by the phycocyanobilin lyase CpcT.

It is found in the cellular thylakoid membrane. Its function is as follows. Light-harvesting photosynthetic bile pigment-protein from the phycobiliprotein complex (phycobilisome, PBS). Phycocyanin is the major phycobiliprotein in the PBS rod. The sequence is that of C-phycocyanin subunit beta (cpcB) from Picosynechococcus sp. (strain ATCC 27264 / PCC 7002 / PR-6) (Agmenellum quadruplicatum).